Consider the following 219-residue polypeptide: Orotate phosphoribosyltransferase (219 aa).

Lys26 serves as a coordination point for 5-phospho-alpha-D-ribose 1-diphosphate. Residue 34–35 (FF) coordinates orotate. Residues 72-73 (YK), Arg98, Lys99, Lys102, His104, and 124-132 (DDVITAGTA) contribute to the 5-phospho-alpha-D-ribose 1-diphosphate site. Thr128 and Arg156 together coordinate orotate.

Belongs to the purine/pyrimidine phosphoribosyltransferase family. PyrE subfamily. In terms of assembly, homodimer. Mg(2+) serves as cofactor.

The catalysed reaction is orotidine 5'-phosphate + diphosphate = orotate + 5-phospho-alpha-D-ribose 1-diphosphate. It functions in the pathway pyrimidine metabolism; UMP biosynthesis via de novo pathway; UMP from orotate: step 1/2. In terms of biological role, catalyzes the transfer of a ribosyl phosphate group from 5-phosphoribose 1-diphosphate to orotate, leading to the formation of orotidine monophosphate (OMP). This is Orotate phosphoribosyltransferase from Xanthomonas oryzae pv. oryzae (strain MAFF 311018).